A 444-amino-acid chain; its full sequence is Transcription activator AFTR-2 (444 aa).

A DNA-binding region (zn(2)-C6 fungal-type) is located at residues 16-43 (CDFCTQSKLRCNKNKPSCRRCTLQQQPC). The interval 49–88 (RRTGRPPKHPRKANDCQEANGQHGDQDPVTSTPGGSYQQQ) is disordered. Over residues 50 to 59 (RTGRPPKHPR) the composition is skewed to basic residues. Residues 76–88 (PVTSTPGGSYQQQ) show a composition bias toward polar residues.

The protein resides in the nucleus. Transcription factor that regulates the expression of the gene clusters that mediate the biosynthesis of the host-selective toxins (HSTs) AF-toxins responsible for Alternaria black spot of strawberry disease by the strawberry pathotype. On cellular level, AF-toxins affect plasma membrane of susceptible cells and cause a sudden increase in loss of K(+) after a few minutes of toxin treatment. The protein is Transcription activator AFTR-2 of Alternaria alternata (Alternaria rot fungus).